We begin with the raw amino-acid sequence, 245 residues long: Acetylglutamate kinase (245 aa).

Substrate-binding positions include 41-42 (GG), Arg-63, and Asn-156.

It belongs to the acetylglutamate kinase family. ArgB subfamily.

The protein localises to the cytoplasm. It carries out the reaction N-acetyl-L-glutamate + ATP = N-acetyl-L-glutamyl 5-phosphate + ADP. It functions in the pathway amino-acid biosynthesis; L-arginine biosynthesis; N(2)-acetyl-L-ornithine from L-glutamate: step 2/4. Functionally, catalyzes the ATP-dependent phosphorylation of N-acetyl-L-glutamate. This chain is Acetylglutamate kinase, found in Leuconostoc citreum (strain KM20).